The sequence spans 147 residues: Cysteine proteinase inhibitor 2 (147 aa).

Residues 1–27 form the signal peptide; the sequence is MATMLKVSLVLSLLGFLVIAVVTPSAA. In terms of domain architecture, Cystatin spans 87-117; that stretch reads LQFSRVVSAQKQVVAGLKYYLRIEVTQPNGS. Residues 98 to 102 carry the Secondary area of contact motif; sequence QVVAG. A glycan (N-linked (GlcNAc...) asparagine) is linked at asparagine 115.

The protein belongs to the cystatin family. Phytocystatin subfamily.

Its subcellular location is the secreted. Specific inhibitor of cysteine proteinases. Probably involved in the regulation of endogenous processes and in defense against pests and pathogens. This chain is Cysteine proteinase inhibitor 2 (CYS2), found in Arabidopsis thaliana (Mouse-ear cress).